The sequence spans 506 residues: Trans-cinnamate 4-monooxygenase (506 aa).

Residues 3-23 (LLLLEKTLLALFIAATIAVTI) traverse the membrane as a helical segment. (E)-cinnamate is bound by residues 213-218 (RSRLAQ) and alanine 307. Position 448 (cysteine 448) interacts with heme.

It belongs to the cytochrome P450 family. The cofactor is heme.

The protein localises to the membrane. It carries out the reaction (E)-cinnamate + reduced [NADPH--hemoprotein reductase] + O2 = (E)-4-coumarate + oxidized [NADPH--hemoprotein reductase] + H2O + H(+). It functions in the pathway phenylpropanoid metabolism; trans-4-coumarate biosynthesis; trans-4-coumarate from trans-cinnamate: step 1/1. Catalyzes the first oxidative step of the phenylpropanoid pathway in higher plants by transforming trans-cinnamate into p-coumarate. The compounds formed by this pathway are essential components for lignification, pollination, and defense against ultraviolet light, predators and pathogens. The chain is Trans-cinnamate 4-monooxygenase (CYP73A3) from Medicago sativa (Alfalfa).